Reading from the N-terminus, the 160-residue chain is Transcription elongation factor GreA (160 aa).

The stretch at glutamate 12–serine 76 forms a coiled coil.

The protein belongs to the GreA/GreB family.

Functionally, necessary for efficient RNA polymerase transcription elongation past template-encoded arresting sites. The arresting sites in DNA have the property of trapping a certain fraction of elongating RNA polymerases that pass through, resulting in locked ternary complexes. Cleavage of the nascent transcript by cleavage factors such as GreA or GreB allows the resumption of elongation from the new 3'terminus. GreA releases sequences of 2 to 3 nucleotides. The polypeptide is Transcription elongation factor GreA (Clostridium botulinum (strain Hall / ATCC 3502 / NCTC 13319 / Type A)).